A 272-amino-acid polypeptide reads, in one-letter code: MAKLAAFDMDGTLLMPDHRLGEQTLTALKRLRERNITLTFATGRHVLEMHHVIGEFSLDAFLITGNGTRIHSLEGEELYRQDLAPEAAEAVLHSKWDTQASMHVFNDGGWFTGQARPELLKAHAFSGFHYQLCDPKRMPAHHVTKICFCGDHDDLRRLRIQLNETLGDRAFLCFSAMDCLEVLPVGCNKGAALAVLSQHLGFTLQECMAFGDAMNDREMLGSVGRGFIMGNAMPQLKAELPHLQVIGDCRHQAVSHFLTHWLDNPDLPYSPE.

Asp8 serves as the catalytic Nucleophile. Mg(2+) contacts are provided by Asp8, Asp10, and Asp212.

It belongs to the HAD-like hydrolase superfamily. Cof family. Requires Mg(2+) as cofactor.

It carries out the reaction 4-amino-2-methyl-5-(diphosphooxymethyl)pyrimidine + H2O = 4-amino-2-methyl-5-(phosphooxymethyl)pyrimidine + phosphate + H(+). In terms of biological role, catalyzes the hydrolysis of 4-amino-2-methyl-5-hydroxymethylpyrimidine pyrophosphate (HMP-PP) to 4-amino-2-methyl-5-hydroxymethylpyrimidine phosphate (HMP-P). This is HMP-PP phosphatase from Klebsiella pneumoniae (strain 342).